A 443-amino-acid chain; its full sequence is C4-dicarboxylate transport protein (443 aa).

Helical transmembrane passes span 17–37, 57–77, 92–112, 139–159, 161–181, 201–221, 234–254, 320–340, and 368–388; these read PFYS…ILLG, LVKM…IAGM, LYFL…ANVV, EQSI…GAFA, GDIL…AMVG, LVGI…AFTI, MLIG…LGAV, IYMT…LSWG, and AATL…ILGI.

Belongs to the dicarboxylate/amino acid:cation symporter (DAACS) (TC 2.A.23) family.

The protein resides in the cell inner membrane. Its function is as follows. Responsible for the transport of dicarboxylates such as succinate, fumarate, and malate from the periplasm across the membrane. The protein is C4-dicarboxylate transport protein of Rhizobium etli (strain ATCC 51251 / DSM 11541 / JCM 21823 / NBRC 15573 / CFN 42).